The sequence spans 787 residues: MFRLWLLLAGLCGLLASRPGFQNSLLQIVIPEKIQTNTNDSSEIEYEQISYIIPIDEKLYTVHLKQRYFLADNFMIYLYNQGSMNTYSSDIQTQCYYQGNIEGYPDSMVTLSTCSGLRGILQFENVSYGIEPLESAVEFQHVLYKLKNEDNDIAIFIDRSLKEQPMDDNIFISEKSEPAVPDLFPLYLEMHIVVDKTLYDYWGSDSMIVTNKVIEIVGLANSMFTQFKVTIVLSSLELWSDENKISTVGEADELLQKFLEWKQSYLNLRPHDIAYLLIYMDYPRYLGAVFPGTMCITRYSAGVALYPKEITLEAFAVIVTQMLALSLGISYDDPKKCQCSESTCIMNPEVVQSNGVKTFSSCSLRSFQNFISNVGVKCLQNKPQMQKKSPKPVCGNGRLEGNEICDCGTEAQCGPASCCDFRTCVLKDGAKCYKGLCCKDCQILQSGVECRPKAHPECDIAENCNGTSPECGPDITLINGLSCKNNKFICYDGDCHDLDARCESVFGKGSRNAPFACYEEIQSQSDRFGNCGRDRNNKYVFCGWRNLICGRLVCTYPTRKPFHQENGDVIYAFVRDSVCITVDYKLPRTVPDPLAVKNGSQCDIGRVCVNRECVESRIIKASAHVCSQQCSGHGVCDSRNKCHCSPGYKPPNCQIRSKGFSIFPEEDMGSIMERASGKTENTWLLGFLIALPILIVTTAIVLARKQLKKWFAKEEEFPSSESKSEGSTQTYASQSSSEGSTQTYASQTRSESSSQADTSKSKSEDSAEAYTSRSKSQDSTQTQSSSN.

Positions 1–16 are cleaved as a signal peptide; sequence MFRLWLLLAGLCGLLA. Ser-17 carries the post-translational modification Phosphoserine. Positions 17–174 are excised as a propeptide; that stretch reads SRPGFQNSLL…PMDDNIFISE (158 aa). Asn-39 and Asn-125 each carry an N-linked (GlcNAc...) asparagine glycan. Over 175–682 the chain is Extracellular; that stretch reads KSEPAVPDLF…ERASGKTENT (508 aa). The Peptidase M12B domain occupies 186–383; sequence LYLEMHIVVD…VGVKCLQNKP (198 aa). Cystine bridges form between Cys-295–Cys-378, Cys-337–Cys-362, Cys-339–Cys-344, and Cys-450–Cys-471. Residues 391–479 form the Disintegrin domain; the sequence is KPVCGNGRLE…ECGPDITLIN (89 aa). N-linked (GlcNAc...) asparagine glycosylation is found at Asn-465 and Asn-598. The region spanning 622–654 is the EGF-like domain; it reads SAHVCSQQCSGHGVCDSRNKCHCSPGYKPPNCQ. Intrachain disulfides connect Cys-626-Cys-636, Cys-630-Cys-642, and Cys-644-Cys-653. Residues 683–703 traverse the membrane as a helical segment; the sequence is WLLGFLIALPILIVTTAIVLA. The Cytoplasmic segment spans residues 704–787; the sequence is RKQLKKWFAK…DSTQTQSSSN (84 aa). The disordered stretch occupies residues 715-787; the sequence is EEFPSSESKS…DSTQTQSSSN (73 aa). Residues 728-749 show a composition bias toward polar residues; that stretch reads TQTYASQSSSEGSTQTYASQTR. A compositionally biased stretch (low complexity) spans 771 to 787; that stretch reads TSRSKSQDSTQTQSSSN.

As to expression, testis specific.

The protein resides in the membrane. May play a role in sperm development and fertilization This is a non-catalytic metalloprotease-like protein. This Homo sapiens (Human) protein is Disintegrin and metalloproteinase domain-containing protein 32 (ADAM32).